Reading from the N-terminus, the 140-residue chain is MRHGKAGRKLNRTASHRKAMFANMAASLITHEQIVTTLPKAKEIRPIVEKLVTLGKRGDLHARRQAISQIRDAAVVSKLFDTIATRYATRNGGYLRIMKAGFRQGDNAAMAVVEFVDRDTFAKGAADKARVAAEEQAVAA.

Belongs to the bacterial ribosomal protein bL17 family. As to quaternary structure, part of the 50S ribosomal subunit. Contacts protein L32.

In Rhizobium leguminosarum bv. trifolii (strain WSM2304), this protein is Large ribosomal subunit protein bL17.